The primary structure comprises 333 residues: D-fructose 1,6-bisphosphatase class 2/sedoheptulose 1,7-bisphosphatase (333 aa).

D33, E57, D85, and E88 together coordinate Mn(2+). Residues 88 to 90 (EGT), Y119, 164 to 166 (RTR), and 186 to 188 (DGD) contribute to the substrate site. Residue E213 participates in Mn(2+) binding.

This sequence belongs to the FBPase class 2 family. As to quaternary structure, homotetramer. The cofactor is Mn(2+).

It catalyses the reaction beta-D-fructose 1,6-bisphosphate + H2O = beta-D-fructose 6-phosphate + phosphate. It carries out the reaction D-sedoheptulose 1,7-bisphosphate + H2O = D-sedoheptulose 7-phosphate + phosphate. The protein operates within carbohydrate biosynthesis; Calvin cycle. In terms of biological role, catalyzes the hydrolysis of fructose 1,6-bisphosphate (Fru 1,6-P2) and sedoheptulose 1,7-bisphosphate (Sed 1,7-P2) to fructose 6-phosphate and sedoheptulose 7-phosphate, respectively. The chain is D-fructose 1,6-bisphosphatase class 2/sedoheptulose 1,7-bisphosphatase from Prochlorococcus marinus (strain AS9601).